The following is a 37-amino-acid chain: Cytochrome b6-f complex subunit 5 (37 aa).

Residues 5–25 (FLFGIVLGLIPITLTGLFVTA) traverse the membrane as a helical segment.

The protein belongs to the PetG family. In terms of assembly, the 4 large subunits of the cytochrome b6-f complex are cytochrome b6, subunit IV (17 kDa polypeptide, PetD), cytochrome f and the Rieske protein, while the 4 small subunits are PetG, PetL, PetM and PetN. The complex functions as a dimer.

The protein resides in the plastid. It localises to the chloroplast thylakoid membrane. Its function is as follows. Component of the cytochrome b6-f complex, which mediates electron transfer between photosystem II (PSII) and photosystem I (PSI), cyclic electron flow around PSI, and state transitions. PetG is required for either the stability or assembly of the cytochrome b6-f complex. The sequence is that of Cytochrome b6-f complex subunit 5 from Phalaenopsis aphrodite subsp. formosana (Moth orchid).